The primary structure comprises 383 residues: Lipid-A-disaccharide synthase (383 aa).

The protein belongs to the LpxB family.

The catalysed reaction is 2-N,3-O-bis[(3R)-3-hydroxytetradecanoyl]-alpha-D-glucosaminyl 1-phosphate + UDP-2-N,3-O-bis[(3R)-3-hydroxytetradecanoyl]-alpha-D-glucosamine = lipid A disaccharide (E. coli) + UDP + H(+). The enzyme catalyses a lipid X + a UDP-2-N,3-O-bis[(3R)-3-hydroxyacyl]-alpha-D-glucosamine = a lipid A disaccharide + UDP + H(+). The protein operates within glycolipid biosynthesis; lipid IV(A) biosynthesis; lipid IV(A) from (3R)-3-hydroxytetradecanoyl-[acyl-carrier-protein] and UDP-N-acetyl-alpha-D-glucosamine: step 5/6. Functionally, condensation of UDP-2,3-diacylglucosamine and 2,3-diacylglucosamine-1-phosphate to form lipid A disaccharide, a precursor of lipid A, a phosphorylated glycolipid that anchors the lipopolysaccharide to the outer membrane of the cell. This Pectobacterium atrosepticum (strain SCRI 1043 / ATCC BAA-672) (Erwinia carotovora subsp. atroseptica) protein is Lipid-A-disaccharide synthase.